The chain runs to 481 residues: Probable glycine dehydrogenase (decarboxylating) subunit 2 (481 aa).

The segment at 1–23 is disordered; the sequence is MVIFEKTRGKNSPSVMPSKKGDV. N6-(pyridoxal phosphate)lysine is present on K263.

The protein belongs to the GcvP family. C-terminal subunit subfamily. As to quaternary structure, the glycine cleavage system is composed of four proteins: P, T, L and H. In this organism, the P 'protein' is a heterodimer of two subunits. The cofactor is pyridoxal 5'-phosphate.

It catalyses the reaction N(6)-[(R)-lipoyl]-L-lysyl-[glycine-cleavage complex H protein] + glycine + H(+) = N(6)-[(R)-S(8)-aminomethyldihydrolipoyl]-L-lysyl-[glycine-cleavage complex H protein] + CO2. The glycine cleavage system catalyzes the degradation of glycine. The P protein binds the alpha-amino group of glycine through its pyridoxal phosphate cofactor; CO(2) is released and the remaining methylamine moiety is then transferred to the lipoamide cofactor of the H protein. This is Probable glycine dehydrogenase (decarboxylating) subunit 2 from Francisella philomiragia subsp. philomiragia (strain ATCC 25017 / CCUG 19701 / FSC 153 / O#319-036).